We begin with the raw amino-acid sequence, 269 residues long: Bidirectional sugar transporter SWEET1a (269 aa).

The Extracellular segment spans residues 1–6 (MEHIAR). The chain crosses the membrane as a helical span at residues 7–27 (FFFGVSGNVIALFLFLSPVVT). In terms of domain architecture, MtN3/slv 1 spans 8-96 (FFGVSGNVIA…IFLIFAVDRR (89 aa)). The Cytoplasmic portion of the chain corresponds to 28–42 (FWRIIRKRSTEDFSG). Residues 43–63 (VPYNMTLLNCLLSAWYGLPFV) traverse the membrane as a helical segment. The Extracellular segment spans residues 64–72 (SPNNILVST). A helical transmembrane segment spans residues 73–93 (INGTGSVIEAIYVVIFLIFAV). Residues 94–100 (DRRARLR) are Cytoplasmic-facing. The chain crosses the membrane as a helical span at residues 101–121 (MLGLLSIVVSIFATVVLVSLL). Residues 122-129 (ALHGNARK) lie on the Extracellular side of the membrane. Residues 130 to 150 (VFCGLAATIFSICMYASPLSI) form a helical membrane-spanning segment. Residues 132 to 215 (CGLAATIFSI…ILYFIYRKNK (84 aa)) form the MtN3/slv 2 domain. Topologically, residues 151-164 (MRLVIKTKSVEYMP) are cytoplasmic. A helical membrane pass occupies residues 165–185 (FLLSLAVFLCGTSWFIYGLLG). At 186 to 189 (RDPF) the chain is on the extracellular side. Residues 190-210 (IIIPNGCGSFLGLVQLILYFI) traverse the membrane as a helical segment. The Cytoplasmic segment spans residues 211–269 (YRKNKGPAVPAGKGEAAAAADVEDAKKVAAAVEMADATTTNKAAADTVVGDGKVVASQV).

The protein belongs to the SWEET sugar transporter family. As to quaternary structure, forms homooligomers and/or heterooligomers.

The protein localises to the cell membrane. Functionally, mediates both low-affinity uptake and efflux of sugar across the plasma membrane. The polypeptide is Bidirectional sugar transporter SWEET1a (Sorghum bicolor (Sorghum)).